Reading from the N-terminus, the 166-residue chain is Interferon gamma (166 aa).

The N-terminal stretch at 1 to 23 (MKYTSYILAFQLCIVLGSLGCYC) is a signal peptide. Q24 carries the post-translational modification Pyrrolidone carboxylic acid. Residues N48, N86, and N120 are each glycosylated (N-linked (GlcNAc...) asparagine).

This sequence belongs to the type II (or gamma) interferon family. Homodimer. Interacts with IFNGR1 (via extracellular domain); this interaction promotes IFNGR1 dimerization. In terms of tissue distribution, released primarily from activated T lymphocytes.

Its subcellular location is the secreted. Type II interferon produced by immune cells such as T-cells and NK cells that plays crucial roles in antimicrobial, antiviral, and antitumor responses by activating effector immune cells and enhancing antigen presentation. Primarily signals through the JAK-STAT pathway after interaction with its receptor IFNGR1 to affect gene regulation. Upon IFNG binding, IFNGR1 intracellular domain opens out to allow association of downstream signaling components JAK2, JAK1 and STAT1, leading to STAT1 activation, nuclear translocation and transcription of IFNG-regulated genes. Many of the induced genes are transcription factors such as IRF1 that are able to further drive regulation of a next wave of transcription. Plays a role in class I antigen presentation pathway by inducing a replacement of catalytic proteasome subunits with immunoproteasome subunits. In turn, increases the quantity, quality, and repertoire of peptides for class I MHC loading. Increases the efficiency of peptide generation also by inducing the expression of activator PA28 that associates with the proteasome and alters its proteolytic cleavage preference. Up-regulates as well MHC II complexes on the cell surface by promoting expression of several key molecules such as cathepsins B/CTSB, H/CTSH, and L/CTSL. Participates in the regulation of hematopoietic stem cells during development and under homeostatic conditions by affecting their development, quiescence, and differentiation. This is Interferon gamma (IFNG) from Saimiri sciureus (Common squirrel monkey).